A 382-amino-acid polypeptide reads, in one-letter code: Mannitol-1-phosphate 5-dehydrogenase (382 aa).

3–14 lines the NAD(+) pocket; the sequence is AIHFGAGNIGRG.

The protein belongs to the mannitol dehydrogenase family.

The catalysed reaction is D-mannitol 1-phosphate + NAD(+) = beta-D-fructose 6-phosphate + NADH + H(+). The sequence is that of Mannitol-1-phosphate 5-dehydrogenase from Psychromonas ingrahamii (strain DSM 17664 / CCUG 51855 / 37).